A 406-amino-acid polypeptide reads, in one-letter code: High mobility group nucleosome-binding domain-containing protein 5 (406 aa).

Residues 1 to 406 (MPKRKAAGDV…GEKEEPLSIV (406 aa)) form a disordered region. A Phosphothreonine modification is found at Thr29. The segment covering 35–44 (KRASTSRKTK) has biased composition (basic residues). 5 stretches are compositionally biased toward basic and acidic residues: residues 63-72 (TKPEDVKDEC), 92-101 (MEAEEVKEQI), 110-126 (GEKKEAVAAEAKDDELK), 136-159 (EDGKEHKDTGEEVEDGKIEEEGLN), and 166-187 (KSEDAEVSKDEEEKGDNEKGED). Lys64 participates in a covalent cross-link: Glycyl lysine isopeptide (Lys-Gly) (interchain with G-Cter in SUMO2). A Glycyl lysine isopeptide (Lys-Gly) (interchain with G-Cter in SUMO1); alternate cross-link involves residue Lys98. Residue Lys98 forms a Glycyl lysine isopeptide (Lys-Gly) (interchain with G-Cter in SUMO2); alternate linkage. Lys121 is covalently cross-linked (Glycyl lysine isopeptide (Lys-Gly) (interchain with G-Cter in SUMO2)). The segment covering 188–200 (GKEEGDEKEEEKD) has biased composition (acidic residues). Basic and acidic residues-rich tracts occupy residues 201-239 (DKEGDTGTEKEVKEQNKEAEEDDGKCKEEENKEVGKEGQ), 246-266 (EDLHEEVGKEDLHEEDGKEGQ), 272-284 (KEIHHEEDGKEGQ), and 290-311 (KEYLHEEDGEEGQPKEDQKEGQ). Residues 312–325 (PEEDGKEDQPEEDG) show a composition bias toward acidic residues. The segment covering 326–365 (KEGQCKEDGKEGHHEEGGKEDLHEEDGKEKDGGKEDRKEE) has biased composition (basic and acidic residues). Residues 366-376 (GEQEVAVDEGS) show a composition bias toward acidic residues. The segment covering 377–406 (DENKVEAEEEGAENKDFKQDGEKEEPLSIV) has biased composition (basic and acidic residues).

This sequence belongs to the HMGN family. As to expression, expressed in liver, spleen, lung, heart, kidney, muscle and brain (at protein level). Widely expressed with highest levels in submaxillary gland, thymus, kidney and liver and lowest levels in brain, lung, pancreas and eye.

It localises to the nucleus. Its function is as follows. Preferentially binds to euchromatin and modulates cellular transcription by counteracting linker histone-mediated chromatin compaction. This chain is High mobility group nucleosome-binding domain-containing protein 5 (Hmgn5), found in Mus musculus (Mouse).